We begin with the raw amino-acid sequence, 587 residues long: Deoxynucleoside triphosphate triphosphohydrolase sahd-1 (587 aa).

An HD domain is found at 92–262 (RFVHSLGTFS…GHDVDKMDYL (171 aa)). Zn(2+)-binding residues include His95, His134, Asp135, and Asp257. The tract at residues 554-587 (EKFLTPRKRSPQDSPDEVSSSCSTAKRRLEFGSS) is disordered. Thr558 is subject to Phosphothreonine.

It belongs to the SAMHD1 family. In terms of assembly, homodimer. Homotetramer; in dGTP-bound form. Zn(2+) is required as a cofactor.

It is found in the nucleus. It localises to the chromosome. It carries out the reaction a 2'-deoxyribonucleoside 5'-triphosphate + H2O = a 2'-deoxyribonucleoside + triphosphate + H(+). Its activity is regulated as follows. Allosterically activated and regulated by GTP or dGTP. Allosteric activation promotes the formation of highly active homotetramers. Phosphorylation impairs homotetramerization, thereby inhibiting dNTPase activity. Has deoxynucleoside triphosphate (dNTPase) activity. dNTPase activity acts as a regulator of DNA precursor pools by regulating dNTP pools. Phosphorylation acts as a switch to control dNTPase-dependent and -independent functions. This Caenorhabditis elegans protein is Deoxynucleoside triphosphate triphosphohydrolase sahd-1.